Consider the following 1639-residue polypeptide: Peroxide stress-activated histidine kinase mak1 (1639 aa).

A compositionally biased stretch (polar residues) spans 38 to 49; that stretch reads SFTNSQNSSVGS. The tract at residues 38-76 is disordered; that stretch reads SFTNSQNSSVGSVHSPILESPTSLNRQHRNSFSFNNVSS. Low complexity predominate over residues 67-76; sequence NSFSFNNVSS. One can recognise a PAS 1 domain in the interval 716 to 786; it reads PFPLLKVIID…NDWKSSLFSG (71 aa). The PAC 1 domain occupies 789–841; it reads FYHEIRLQRFDNVYRYFICRAVPLRDCTGSVLHFFGTMTDVHDQKLAERELQK. A PAS 2 domain is found at 848–920; it reads NENSYRSLAE…ESLEGTFNNQ (73 aa). Residues 929–982 form the PAC 2 domain; it reads FAAEIRFRSTDGHYRWHLVKSVCVNNSADTSTNLWLGTCTDIHDHKMLEEKLQE. The region spanning 1000–1223 is the Histidine kinase domain; it reads NMSHEIRTPL…RFMWTATFTM (224 aa). At H1003 the chain carries Phosphohistidine; by autocatalysis. Positions 1507–1629 constitute a Response regulatory domain; sequence SVLLAEDNII…HLSLIISGIL (123 aa). A 4-aspartylphosphate modification is found at D1559.

Its subcellular location is the cytoplasm. The enzyme catalyses ATP + protein L-histidine = ADP + protein N-phospho-L-histidine.. In terms of biological role, involved in the control of the SAPK-dependent transcriptional response to peroxide stress. Also has a role in G2/M regulation. This chain is Peroxide stress-activated histidine kinase mak1 (mak1), found in Schizosaccharomyces pombe (strain 972 / ATCC 24843) (Fission yeast).